The chain runs to 183 residues: Thioredoxin/glutathione peroxidase BtuE (183 aa).

Cys37 is an active-site residue.

This sequence belongs to the glutathione peroxidase family. BtuE subfamily.

It localises to the periplasm. The catalysed reaction is 2 glutathione + H2O2 = glutathione disulfide + 2 H2O. The enzyme catalyses a hydroperoxide + [thioredoxin]-dithiol = an alcohol + [thioredoxin]-disulfide + H2O. Its function is as follows. Non-specific peroxidase that can use thioredoxin or glutathione as a reducing agent. In vitro, utilizes preferentially thioredoxin A to decompose hydrogen peroxide as well as cumene-, tert-butyl-, and linoleic acid hydroperoxides, suggesting that it may have one or more organic hydroperoxide as its physiological substrate. The protein is Thioredoxin/glutathione peroxidase BtuE of Escherichia coli (strain K12).